Here is a 379-residue protein sequence, read N- to C-terminus: 3-dehydroquinate synthase (379 aa).

Residues 113–117 (GVIGD), 137–138 (TS), Lys-150, and Lys-159 contribute to the NAD(+) site. Residues Glu-192, His-256, and His-274 each contribute to the Zn(2+) site.

Belongs to the sugar phosphate cyclases superfamily. Dehydroquinate synthase family. The cofactor is Co(2+). Zn(2+) is required as a cofactor. Requires NAD(+) as cofactor.

It is found in the cytoplasm. The enzyme catalyses 7-phospho-2-dehydro-3-deoxy-D-arabino-heptonate = 3-dehydroquinate + phosphate. Its pathway is metabolic intermediate biosynthesis; chorismate biosynthesis; chorismate from D-erythrose 4-phosphate and phosphoenolpyruvate: step 2/7. In terms of biological role, catalyzes the conversion of 3-deoxy-D-arabino-heptulosonate 7-phosphate (DAHP) to dehydroquinate (DHQ). In Zymomonas mobilis subsp. mobilis (strain ATCC 31821 / ZM4 / CP4), this protein is 3-dehydroquinate synthase.